Consider the following 61-residue polypeptide: MRMSKTVKVTQLKSSIGRLPKHRATLKGLGLRRINHTVELEDTPSVRGMINKVYYMVKVED.

The protein belongs to the universal ribosomal protein uL30 family. In terms of assembly, part of the 50S ribosomal subunit.

The sequence is that of Large ribosomal subunit protein uL30 from Colwellia psychrerythraea (strain 34H / ATCC BAA-681) (Vibrio psychroerythus).